Reading from the N-terminus, the 435-residue chain is Virulence factor PIT1 (435 aa).

5 helical membrane-spanning segments follow: residues 33-53, 77-97, 111-131, 143-163, and 204-224; these read ETTTWNLPIMIAQALLVSEVI, IFFILIKYLTIFAVIFDILVT, WAWTSSTFYFMCSTLVFCVIG, VASWSLSVGLMGQFAVAMWTN, and TFWFLLYNTIFESSILMACCI. Asn330 is a glycosylation site (N-linked (GlcNAc...) asparagine). The segment covering 392-404 has biased composition (polar residues); it reads SPQMPSKAQSQSI. Residues 392-435 are disordered; the sequence is SPQMPSKAQSQSIPYKREVEVTVDMSPVPPPPGPSPAPLPAPYM. The segment covering 418–435 has biased composition (pro residues); it reads PVPPPPGPSPAPLPAPYM.

O-mannosylated by PMT4. Is also N-glycosylated.

Its subcellular location is the cell membrane. Its function is as follows. Plasma membrane virulence factor required for spreading and inducing tumors in infected leaves. In Mycosarcoma maydis (Corn smut fungus), this protein is Virulence factor PIT1.